Reading from the N-terminus, the 368-residue chain is tRNA/tmRNA (uracil-C(5))-methyltransferase (368 aa).

S-adenosyl-L-methionine is bound by residues Q190, Y218, N223, E239, and D301. C326 acts as the Nucleophile in catalysis. E360 (proton acceptor) is an active-site residue.

The protein belongs to the class I-like SAM-binding methyltransferase superfamily. RNA M5U methyltransferase family. TrmA subfamily.

The catalysed reaction is uridine(54) in tRNA + S-adenosyl-L-methionine = 5-methyluridine(54) in tRNA + S-adenosyl-L-homocysteine + H(+). It catalyses the reaction uridine(341) in tmRNA + S-adenosyl-L-methionine = 5-methyluridine(341) in tmRNA + S-adenosyl-L-homocysteine + H(+). Its function is as follows. Dual-specificity methyltransferase that catalyzes the formation of 5-methyluridine at position 54 (m5U54) in all tRNAs, and that of position 341 (m5U341) in tmRNA (transfer-mRNA). The polypeptide is tRNA/tmRNA (uracil-C(5))-methyltransferase (Aliivibrio fischeri (strain MJ11) (Vibrio fischeri)).